The following is a 242-amino-acid chain: MKVSLFITCLSDVFFPQVGKSVVEIMNQCGVELDFPEGQTCCGQPAYNSGYQEDAKLAAKQMIKAFEHSEYIVTPSGSCASMVHHYYKEMFKGDSEWYEKAVHLADRTYELTDFVVNILGKNDWKSKLVEKAVFHQSCHMSRALGIKEEPLKLLSQVEGLDIKELPYCQDCCGFGGTFAVKMSSISETMVDEKIKHIEATEANLLIGADMGCLMNIGGRLRRENKNIQVLHVAEVLAKGLNK.

The protein belongs to the LutA/YkgE family.

Functionally, is involved in L-lactate degradation and allows cells to grow with lactate as the sole carbon source. The protein is Lactate utilization protein A 1 of Bacillus anthracis (strain CDC 684 / NRRL 3495).